The following is a 65-amino-acid chain: Large ribosomal subunit protein bL35 (65 aa).

Belongs to the bacterial ribosomal protein bL35 family.

The chain is Large ribosomal subunit protein bL35 from Burkholderia ambifaria (strain MC40-6).